The chain runs to 329 residues: DNA-directed RNA polymerase subunit alpha (329 aa).

Residues 1–231 (MQTTLLKPKT…EQLAVFAQLE (231 aa)) are alpha N-terminal domain (alpha-NTD). The segment at 249 to 329 (FDPILLRPVD…SWPPAGLDKR (81 aa)) is alpha C-terminal domain (alpha-CTD).

It belongs to the RNA polymerase alpha chain family. Homodimer. The RNAP catalytic core consists of 2 alpha, 1 beta, 1 beta' and 1 omega subunit. When a sigma factor is associated with the core the holoenzyme is formed, which can initiate transcription.

The enzyme catalyses RNA(n) + a ribonucleoside 5'-triphosphate = RNA(n+1) + diphosphate. In terms of biological role, DNA-dependent RNA polymerase catalyzes the transcription of DNA into RNA using the four ribonucleoside triphosphates as substrates. This chain is DNA-directed RNA polymerase subunit alpha, found in Variovorax paradoxus (strain S110).